We begin with the raw amino-acid sequence, 664 residues long: Acetylcholinesterase (664 aa).

The signal sequence occupies residues 1–29; the sequence is MFVNQRTRRPYMSVFVLVLGAAVICPAYG. A disulfide bridge links C95 with C122. N117 is a glycosylation site (N-linked (GlcNAc...) asparagine). S261 serves as the catalytic Acyl-ester intermediate. C315 and C330 form a disulfide bridge. Residue N316 is glycosylated (N-linked (GlcNAc...) asparagine). Residues E390 and H504 each act as charge relay system in the active site. C466 and C588 are joined by a disulfide. N517 carries an N-linked (GlcNAc...) asparagine glycan. The GPI-anchor amidated asparagine moiety is linked to residue N647. The propeptide at 648–664 is removed in mature form; it reads KTPPHPQVILETRAFMH.

It belongs to the type-B carboxylesterase/lipase family. Homodimer; disulfide-linked.

The protein resides in the synapse. The protein localises to the cell membrane. The enzyme catalyses acetylcholine + H2O = choline + acetate + H(+). Its function is as follows. Rapidly hydrolyzes choline released into the synapse. It can hydrolyze butyrylthiocholine. The protein is Acetylcholinesterase of Anopheles stephensi (Indo-Pakistan malaria mosquito).